The sequence spans 348 residues: Zinc transporter ZIP13 (348 aa).

Residues 1 to 45 (MMIQTAVAQAKTAPAGPGPWSIKDLVDLQYLDELMSIDNLDVWFC) lie on the Cytoplasmic side of the membrane. The helical transmembrane segment at 46 to 66 (SLVGSIAIGLSGIFPLLVIPI) threads the bilayer. The Lumenal portion of the chain corresponds to 67 to 83 (EAGTALKTEAGCQKLKK). Residues 84-104 (LLSFAIGGLLGDVFLHLLPEA) traverse the membrane as a helical segment. Over 105 to 118 (WAYTSSPGGSHRHY) the chain is Cytoplasmic. Residues 119 to 139 (CTQGLWVIGGLMSFLTLEKMF) traverse the membrane as a helical segment. Topologically, residues 140–219 (PDEVGDPETK…CIDNFTHGLA (80 aa)) are lumenal. The segment at 144 to 192 (GDPETKTSFQRTTSSSSDLSSQFSVSPQTNGICSNNNSDSKPKTDISPY) is disordered. The segment covering 149 to 169 (KTSFQRTTSSSSDLSSQFSVS) has biased composition (low complexity). Residues 170-182 (PQTNGICSNNNSD) are compositionally biased toward polar residues. The helical transmembrane segment at 220 to 240 (VAGSFLVSRKVGFLTTFAILL) threads the bilayer. An XEXPHE-motif motif is present at residues 241-246 (HEIPHE). Residues 241 to 262 (HEIPHEVGDFAILLRAGFDRWK) are Cytoplasmic-facing. The helical transmembrane segment at 263–283 (AARMQLSTALGGVLGACFALC) threads the bilayer. Over 284–294 (SQSQHGAENAT) the chain is Lumenal. The chain crosses the membrane as a helical span at residues 295–315 (TWILPFTSGGFLYIALVNVVP). Residues 316 to 326 (DLLEETNPRNS) are Cytoplasmic-facing. The helical transmembrane segment at 327–347 (LLQVLLLFSGIGVMALLSIAM) threads the bilayer. Residue Asp-348 is a topological domain, lumenal.

The protein belongs to the ZIP transporter (TC 2.A.5) family. In terms of assembly, homodimer.

The protein localises to the golgi apparatus membrane. The protein resides in the cytoplasmic vesicle membrane. It is found in the endoplasmic reticulum membrane. It carries out the reaction Zn(2+)(in) = Zn(2+)(out). Functions as a zinc transporter transporting Zn(2+) from the Golgi apparatus to the cytosol and thus influences the zinc level at least in areas of the cytosol. The sequence is that of Zinc transporter ZIP13 from Danio rerio (Zebrafish).